The chain runs to 121 residues: Small ribosomal subunit protein uS13 (121 aa).

A disordered region spans residues 91–121 (HRRGLPVRGQNSKNNARTRKGPRRTVANKKK). Over residues 106–121 (ARTRKGPRRTVANKKK) the composition is skewed to basic residues.

This sequence belongs to the universal ribosomal protein uS13 family. As to quaternary structure, part of the 30S ribosomal subunit. Forms a loose heterodimer with protein S19. Forms two bridges to the 50S subunit in the 70S ribosome.

Its function is as follows. Located at the top of the head of the 30S subunit, it contacts several helices of the 16S rRNA. In the 70S ribosome it contacts the 23S rRNA (bridge B1a) and protein L5 of the 50S subunit (bridge B1b), connecting the 2 subunits; these bridges are implicated in subunit movement. Contacts the tRNAs in the A and P-sites. The polypeptide is Small ribosomal subunit protein uS13 (Bacillus mycoides (strain KBAB4) (Bacillus weihenstephanensis)).